The chain runs to 269 residues: MPELPEVEITKRGLVPLIINQEVSRVILHRENLRWAIPKNLITILANQKIKTIKRRAKYLLIKFEAGTLIIHLGMSGSIKVVDIKTPLLKHEHFELQFNNGTSMRLNDPRRFGAVLFSKDGSHKLLDSLGVEPLEAVFNNGYLYQKSRNKRKNIKDFIMDSKIVVGVGNIYACESLFMASINPQRKAGNVSKTRYKILTQCIKDILTQAIKAGGTTLQDFSQVDGNPGYFTQTLSVYGCENKTCHFCKSKIIKIVQNQRSTFYCRKCQT.

The active-site Schiff-base intermediate with DNA is Pro-2. Catalysis depends on Glu-3, which acts as the Proton donor. The active-site Proton donor; for beta-elimination activity is the Lys-58. His-91, Arg-110, and Lys-150 together coordinate DNA. The FPG-type zinc finger occupies 235 to 269 (SVYGCENKTCHFCKSKIIKIVQNQRSTFYCRKCQT). Arg-259 acts as the Proton donor; for delta-elimination activity in catalysis.

Belongs to the FPG family. In terms of assembly, monomer. It depends on Zn(2+) as a cofactor.

The catalysed reaction is Hydrolysis of DNA containing ring-opened 7-methylguanine residues, releasing 2,6-diamino-4-hydroxy-5-(N-methyl)formamidopyrimidine.. The enzyme catalyses 2'-deoxyribonucleotide-(2'-deoxyribose 5'-phosphate)-2'-deoxyribonucleotide-DNA = a 3'-end 2'-deoxyribonucleotide-(2,3-dehydro-2,3-deoxyribose 5'-phosphate)-DNA + a 5'-end 5'-phospho-2'-deoxyribonucleoside-DNA + H(+). Its function is as follows. Involved in base excision repair of DNA damaged by oxidation or by mutagenic agents. Acts as a DNA glycosylase that recognizes and removes damaged bases. Has a preference for oxidized purines, such as 7,8-dihydro-8-oxoguanine (8-oxoG). Has AP (apurinic/apyrimidinic) lyase activity and introduces nicks in the DNA strand. Cleaves the DNA backbone by beta-delta elimination to generate a single-strand break at the site of the removed base with both 3'- and 5'-phosphates. The sequence is that of Formamidopyrimidine-DNA glycosylase from Ruthia magnifica subsp. Calyptogena magnifica.